The primary structure comprises 664 residues: Putative membrane protein Bcell_0381 (664 aa).

A compositionally biased stretch (acidic residues) spans 588–616 (DVTQDENGEEKSEEDNKEEIVEENTEEDN). The interval 588–622 (DVTQDENGEEKSEEDNKEEIVEENTEEDNKEEKTI) is disordered. Residues 636 to 656 (YQFLLAGIIMLVGGSCIYVFY) form a helical membrane-spanning segment.

It is found in the cell membrane. The polypeptide is Putative membrane protein Bcell_0381 (Evansella cellulosilytica (strain ATCC 21833 / DSM 2522 / FERM P-1141 / JCM 9156 / N-4) (Bacillus cellulosilyticus)).